The chain runs to 305 residues: uncharacterized protein (305 aa).

Residues 267–287 (ADEQEKNWNGGAKKNARAEPA) form a disordered region.

This sequence belongs to the DnaB/DnaD family.

This is an uncharacterized protein from Listeria innocua serovar 6a (strain ATCC BAA-680 / CLIP 11262).